The primary structure comprises 747 residues: DNA damage checkpoint protein LCD1 (747 aa).

Phosphoserine is present on residues Ser-10, Ser-11, and Ser-76. Residues 62–139 are a coiled coil; sequence NQLVNQLNKA…MEARGKSKRE (78 aa). Positions 145–180 are disordered; that stretch reads KPPSTTLSTNTNTITPDSSSVAIEAKPQSPQSKKRK. The span at 146–160 shows a compositional bias: low complexity; sequence PPSTTLSTNTNTITP.

As to quaternary structure, forms a complex with MEC1. In terms of processing, phosphorylated by MEC1 in a cell cycle dependent manner and in response to DNA damage.

The protein resides in the cytoplasm. It is found in the nucleus. Its function is as follows. Forms a complex with the serine/threonine kinase MEC1 which activates checkpoint signaling upon genotoxic stresses. The MEC1-LCD1 complex is recruited by the single-strand-binding protein complex RPA to DNA lesions in order to initiate the DNA repair by homologous recombination, after the MRX-complex and TEL1 are displaced. Required for the recruitment of MEC1 to DNA lesions, the activation of CHK1 and RAD53 kinases and phosphorylation of RAD9 in response to DNA damage. Required for cell growth and meiotic recombination. This Saccharomyces cerevisiae (strain ATCC 204508 / S288c) (Baker's yeast) protein is DNA damage checkpoint protein LCD1 (LCD1).